Reading from the N-terminus, the 155-residue chain is Large ribosomal subunit protein uL22c (155 aa).

The protein belongs to the universal ribosomal protein uL22 family. As to quaternary structure, part of the 50S ribosomal subunit.

Its subcellular location is the plastid. It localises to the chloroplast. Functionally, this protein binds specifically to 23S rRNA. The globular domain of the protein is located near the polypeptide exit tunnel on the outside of the subunit, while an extended beta-hairpin is found that lines the wall of the exit tunnel in the center of the 70S ribosome. The polypeptide is Large ribosomal subunit protein uL22c (rpl22) (Nicotiana sylvestris (Wood tobacco)).